A 216-amino-acid chain; its full sequence is 3-isopropylmalate dehydratase small subunit (216 aa).

It belongs to the LeuD family. LeuD type 1 subfamily. In terms of assembly, heterodimer of LeuC and LeuD.

The enzyme catalyses (2R,3S)-3-isopropylmalate = (2S)-2-isopropylmalate. It participates in amino-acid biosynthesis; L-leucine biosynthesis; L-leucine from 3-methyl-2-oxobutanoate: step 2/4. Its function is as follows. Catalyzes the isomerization between 2-isopropylmalate and 3-isopropylmalate, via the formation of 2-isopropylmaleate. This is 3-isopropylmalate dehydratase small subunit from Burkholderia ambifaria (strain MC40-6).